Here is a 351-residue protein sequence, read N- to C-terminus: C(7)-cyclitol 7-kinase (351 aa).

It belongs to the ROK (NagC/XylR) family.

It catalyses the reaction valienone + ATP = valienone 7-phosphate + ADP + H(+). The enzyme catalyses validone + ATP = validone 7-phosphate + ADP + H(+). Functionally, involved in the biosynthesis of the antifungal agent validamycin A. Catalyzes the phosphorylation of valienone and validone to their 7-phosphate derivatives. The polypeptide is C(7)-cyclitol 7-kinase (Streptomyces hygroscopicus subsp. jinggangensis (strain 5008)).